The chain runs to 536 residues: Uridine 5'-monophosphate transferase (536 aa).

The tract at residues 22 to 84 is disordered; sequence ADHPTHTPED…GLQQCSSSPS (63 aa). Polar residues predominate over residues 31 to 45; sequence DSPQTVPSPRSSSAH. Residues 48 to 60 show a composition bias toward basic and acidic residues; it reads EIQELRSLQETRP. Polar residues predominate over residues 66 to 84; that stretch reads RSQSRSSKHGLQQCSSSPS. LRR repeat units lie at residues 140 to 164, 165 to 189, 191 to 211, 212 to 234, 236 to 257, and 258 to 282; these read AGQAGTQLTLRDLNLSQLPPGLHRL, AHLRDLDVADNVNLTRLPEDLSLCK, LERINADGCSIAALPSKIGAL, KNLSEISLAFNELRTLPDSIGQC, SLTTIVVPGCKINKLPASLANL, and TQLKKLDVAANIELSELSPHMNLDD. The region spanning 377-533 is the Fido domain; that stretch reads ITLDRIFKLN…LEGIATVMNQ (157 aa).

This sequence in the C-terminal section; belongs to the fic family. In terms of assembly, interacts with several members of the Arabidopsis RLCK VIIa subfamily.

Its subcellular location is the secreted. The protein resides in the host cell. The protein localises to the host cell membrane. The catalysed reaction is L-seryl-[protein] + UTP = O-(5'-uridylyl)-L-seryl-[protein] + diphosphate. It catalyses the reaction L-threonyl-[protein] + UTP = uridylyl-L-threonyl-[protein] + diphosphate. Its function is as follows. Functions both as a virulence and an avirulence gene in Arabidopsis. Causes disease on the Kashmir (Kas) ecotype, but not on Columbia (Col-0) ecotype. Acts by directly uridylylating the conserved phosphorylation sites in the activation loop of a number of host receptor-like cytoplasmic protein kinases (RLCK), including BIK1, RIPK, PBL1 and PBL2, preventing the activation of these kinases and subsequent signal transduction. In susceptible Arabidopsis plants, uridylylation of BIK1 inhibits the PAMP-triggered immunity (PTI) signaling cascade and thereby promotes bacterial virulence. It also inhibits RPM1-dependent effector-triggered immunity (ETI) in mesophyll tissues by targeting RIPK. In contrast, in the resistant ecotype Col-0, xopAC is a major avirulence gene. Uridylylation of PBL2 triggers the PBL2-RKS1 interaction and thus the assembly of the PBL2-RKS1-ZAR1 complex, which, in turn, activates effector-triggered immunity (ETI) against X.campestris. The sequence is that of Uridine 5'-monophosphate transferase from Xanthomonas campestris pv. campestris (strain 8004).